We begin with the raw amino-acid sequence, 437 residues long: Elongation factor Tu, mitochondrial (437 aa).

The N-terminal 38 residues, 1 to 38 (MSALLPRLLTRTAFKASGKLLRLSSVISRTFSQTTTSY), are a transit peptide targeting the mitochondrion. The tr-type G domain occupies 46–242 (KPHVNIGTIG…AVDEYIPTPE (197 aa)). The interval 55 to 62 (GHVDHGKT) is G1. Position 55 to 62 (55 to 62 (GHVDHGKT)) interacts with GTP. The tract at residues 96 to 100 (GITIS) is G2. The segment at 117 to 120 (DCPG) is G3. GTP contacts are provided by residues 117-121 (DCPGH) and 172-175 (NKVD). The G4 stretch occupies residues 172–175 (NKVD). Residues 210-212 (SAL) are G5.

This sequence belongs to the TRAFAC class translation factor GTPase superfamily. Classic translation factor GTPase family. EF-Tu/EF-1A subfamily. In terms of processing, the precursor is processed in two steps involving mitochondrial intermediate peptidase (MIP) and mitochondrial processing peptidase (MPP).

The protein localises to the mitochondrion. Its pathway is protein biosynthesis; polypeptide chain elongation. Functionally, G-protein that, in its active GTP-bound form, binds to and delivers aminoacyl-tRNA to the A-site of ribosomes during protein biosynthesis. In the presence of a correct codon-anticodon match between the aminoacyl-tRNA and the A-site codon of the ribosome-bound mRNA, the ribosome acts as a GTPase activator and the GTP is hydrolyzed. The inactive GDP-bound form leaves the ribosome and must be recycled before binding another molecule of aminoacyl-tRNA. Required for mitochondrial protein biosynthesis and maintenance of mitochondrial DNA. The polypeptide is Elongation factor Tu, mitochondrial (TUF1) (Saccharomyces cerevisiae (strain ATCC 204508 / S288c) (Baker's yeast)).